A 505-amino-acid polypeptide reads, in one-letter code: Protein FAM114A2 (505 aa).

The disordered stretch occupies residues 1–65 (MSDKDDIETP…KPSSDLETSK (65 aa)). Residues 51–63 (KRPETKPSSDLET) are compositionally biased toward basic and acidic residues. A phosphoserine mark is found at Ser87, Ser146, and Ser209. Positions 268–295 (LNSLSGEELETLKVELEQLKETFSLAEF) form a coiled coil. Residues 342 to 366 (KSLTKPLAENEEGEKQSEAENTEQV) form a disordered region.

Belongs to the FAM114 family.

This chain is Protein FAM114A2 (FAM114A2), found in Homo sapiens (Human).